Here is a 183-residue protein sequence, read N- to C-terminus: MSKKIMATQKVIIASLNPAKITAVESAFTSAFPDGTFEFVGVNVPSEVADQPMSDSETHLGALNRVRNAKACRADGAFYVGLEAGIDGNVTFAWMVIESHTHRGESRSASLMLPPNVIAKLPNANELGDVMDEVFGTENIKQKGGAISLLTQNQLTRSSVYHQALILALIPFTNPEHFPANLS.

D75 is a Mg(2+) binding site. 75–76 lines the substrate pocket; that stretch reads DG.

This sequence belongs to the YjjX NTPase family. Homodimer. Mg(2+) serves as cofactor. Requires Mn(2+) as cofactor.

It catalyses the reaction XTP + H2O = XDP + phosphate + H(+). The catalysed reaction is ITP + H2O = IDP + phosphate + H(+). Phosphatase that hydrolyzes non-canonical purine nucleotides such as XTP and ITP to their respective diphosphate derivatives. Probably excludes non-canonical purines from DNA/RNA precursor pool, thus preventing their incorporation into DNA/RNA and avoiding chromosomal lesions. This Vibrio vulnificus (strain YJ016) protein is Inosine/xanthosine triphosphatase.